The primary structure comprises 188 residues: MGFYALLLIALGMSMDAFAVALAKGAAVRMPPRKIAATALVFGSVEALTPLAGWVGGFYAKPFISEWDHWAAFVLLGGLGLKMMREGLSGKAEDVRESKRESLWMTVLTAFGTSIDSMIVGVGLAFMEVNIAFAAAIIGMATTVMVAVGLAAGGALGGLFGKRAEFAGGLVLIAIGTWTLLSHLGLIG.

The next 6 helical transmembrane spans lie at F3–A23, I35–V55, F63–M83, V107–M127, I131–A151, and A167–I187.

The protein belongs to the MntP (TC 9.B.29) family.

The protein localises to the cell inner membrane. Probably functions as a manganese efflux pump. This chain is Putative manganese efflux pump MntP, found in Neisseria meningitidis serogroup A / serotype 4A (strain DSM 15465 / Z2491).